Reading from the N-terminus, the 324-residue chain is 4-hydroxy-2-oxoglutarate aldolase, mitochondrial (324 aa).

Residues methionine 1–glutamine 22 constitute a mitochondrion transit peptide. A substrate-binding site is contributed by serine 74–asparagine 75. Lysine 193 serves as the catalytic Schiff-base intermediate with substrate. Substrate is bound by residues serine 195 and glycine 219.

It belongs to the DapA family. In terms of assembly, homotetramer.

The protein resides in the mitochondrion. It carries out the reaction (4S)-4-hydroxy-2-oxoglutarate = glyoxylate + pyruvate. It catalyses the reaction (4R)-4-hydroxy-2-oxoglutarate = glyoxylate + pyruvate. With respect to regulation, inhibited by divalent cations. Catalyzes the final step in the metabolic pathway of hydroxyproline. This is 4-hydroxy-2-oxoglutarate aldolase, mitochondrial from Danio rerio (Zebrafish).